Here is a 362-residue protein sequence, read N- to C-terminus: Probable non-structural 41.0 kDa protein (362 aa).

The segment at 341–362 (MNAAAPSAPTPTELPVFSPPSS) is disordered.

In Maize rough dwarf virus (MRDV), this protein is Probable non-structural 41.0 kDa protein (S6).